A 426-amino-acid chain; its full sequence is Chordin-like protein 2 (426 aa).

An N-terminal signal peptide occupies residues 1–25 (MVPGVRIIPSLLGLVMFWLPLDSQA). 2 consecutive VWFC domains span residues 31-96 (KVCL…PRCV) and 109-175 (KSCQ…QTCK). Residue N114 is glycosylated (N-linked (GlcNAc...) asparagine). At S182 the chain carries Phosphoserine. The span at 182–191 (STEENLTQLQ) shows a compositional bias: polar residues. Positions 182-216 (STEENLTQLQHGERHSQDPCSERRGPSTPAPTSLS) are disordered. N-linked (GlcNAc...) asparagine glycosylation occurs at N186. Residues 192–206 (HGERHSQDPCSERRG) show a composition bias toward basic and acidic residues. The segment covering 207–216 (PSTPAPTSLS) has biased composition (low complexity). Residues 246-311 (KACTHNGKTY…VAGKCCKICP (66 aa)) enclose the VWFC 3 domain.

As to quaternary structure, interacts with GDF5. May interact with INHBA, BMP2, BMP4, BMP5, BMP6, and BMP7. As to expression, weakly expressed in the liver and kidney. In reproductive organs expressed in connective tissues such as ligaments of the ovary and oviduct in females, and of testis, epididymis and certain male accessory sex glands in males. Expression was high in uterine myometrium. Weakly expressed in cartilage of the femoral head, patella, articular facets of vertebrae, in the annulus fibrosus of intervertebral disks. In normal cartilage, expression was confined to articular chondrocytes especially in the superficial zone.

It is found in the secreted. Implicated in tumor angiogenesis. May inhibits BMPs activity by blocking their interaction with their receptors. Has a negative regulator effect on the cartilage formation/regeneration from immature mesenchymal cells, by preventing or reducing the rate of matrix accumulation. May play a role during myoblast and osteoblast differentiation, and maturation. This Mus musculus (Mouse) protein is Chordin-like protein 2 (Chrdl2).